Here is an 82-residue protein sequence, read N- to C-terminus: U1-theraphotoxin-Ct1b (82 aa).

The signal sequence occupies residues 1–23; sequence MRTFTLIAILTCALLVIYHAAEA. Positions 24 to 44 are excised as a propeptide; the sequence is EELEAKDVIESKALATLDEER.

It belongs to the neurotoxin 12 (Hwtx-2) family. 03 (juruin) subfamily. In terms of processing, contains 3 disulfide bonds. Two different connectivities are observed in similar proteins (C1-C3, C2-C5, C4-C6 or C1-C4, C2-C5, C3-C6). Expressed by the venom gland.

The protein resides in the secreted. In terms of biological role, this toxin causes paralysis and death to sheep blowflies. It does not target insect sodium channels. The protein is U1-theraphotoxin-Ct1b of Coremiocnemis tropix (Australian tarantula spider).